The chain runs to 111 residues: MSIAVGMIETLGFPAVVEAADSMVKAARVTLVGYEKIGSGRVTVIVRGDVSEVQASVTAGIENIRRVNGGEVLSNHIIARPHENLEYVLPIRYTEAVEQFREIVNPSIIRR.

Positions 4–90 (AVGMIETLGF…PHENLEYVLP (87 aa)) constitute a BMC domain.

This sequence belongs to the bacterial microcompartments protein family. CcmK subfamily. As to quaternary structure, homohexamer. Interacts with full-length CcmM. Forms mixed heterohexamers of all possible stoichiometries with CcmK2, which might form dodecamers. Only very weak interactions with CcmK3 and CcmK4 were seen. Interacts with CcmN and CcmO in the carboxysome.

It is found in the carboxysome. One of the shell proteins of the carboxysome, a polyhedral inclusion where RuBisCO (ribulose bisphosphate carboxylase, rbcL-rbcS) is sequestered. Assembles into hexamers which make sheets that form the facets of the polyhedral carboxysome. The hexamer central pore probably regulates metabolite flux. In terms of biological role, probably the major shell protein of the carboxysome, a polyhedral inclusion where RuBisCO (ribulose bisphosphate carboxylase, rbcL-rbcS) is sequestered. The central pore probably regulates metabolite flux. Hexamers make sheets that form the facets of the carboxysome. In Synechocystis sp. (strain ATCC 27184 / PCC 6803 / Kazusa), this protein is Carboxysome shell protein CcmK1.